A 317-amino-acid chain; its full sequence is Malate dehydrogenase (317 aa).

Residues 10 to 15 (GGGQIG) and Asp34 contribute to the NAD(+) site. Substrate-binding residues include Arg83 and Arg89. Residues Asn96 and 119 to 121 (ISN) each bind NAD(+). Residues Asn121 and Arg152 each contribute to the substrate site. Catalysis depends on His176, which acts as the Proton acceptor.

This sequence belongs to the LDH/MDH superfamily. MDH type 3 family.

It catalyses the reaction (S)-malate + NAD(+) = oxaloacetate + NADH + H(+). In terms of biological role, catalyzes the reversible oxidation of malate to oxaloacetate. In Geobacter metallireducens (strain ATCC 53774 / DSM 7210 / GS-15), this protein is Malate dehydrogenase.